Consider the following 316-residue polypeptide: Apolipoprotein E (316 aa).

Residues 1 to 18 (MKALWAVLVVTLLAGCLA) form the signal peptide. Repeat copies occupy residues 76-97 (VLME…EQLG), 98-119 (PMAE…SRLG), 120-141 (ADME…TMLG), 142-163 (QSTE…KRLM), 164-185 (RDAE…EGAE), 186-207 (RGVG…QRTA), 208-229 (NLGA…ARIR), and 230-251 (GRLE…EQME). Residues 76–251 (VLMEDTMTEL…RLEEMREQME (176 aa)) are 8 X 22 AA approximate tandem repeats. Met139 is subject to Methionine sulfoxide. Residue Ser143 is modified to Phosphoserine. The segment at 154–164 (HLRKLRKRLMR) is LDL and other lipoprotein receptors binding. Residue 158–161 (LRKR) coordinates heparin. A lipid-binding and lipoprotein association region spans residues 206-286 (TANLGAGAGK…GWFEPLVEDM (81 aa)). 225 to 232 (GARIRGRL) is a heparin binding site. Residues 262–316 (QQMRLQAEIFQARLKGWFEPLVEDMQRQWANLVEKIQASVAANPIPPSSVPQESP) are homooligomerization. The tract at residues 274 to 286 (RLKGWFEPLVEDM) is specificity for association with VLDL.

Belongs to the apolipoprotein A1/A4/E family. Homotetramer. May interact with ABCA1; functionally associated with ABCA1 in the biogenesis of HDLs. May interact with APP/A4 amyloid-beta peptide; the interaction is extremely stable in vitro but its physiological significance is unclear. May interact with MAPT. May interact with MAP2. In the cerebrospinal fluid, interacts with secreted SORL1. Interacts with PMEL; this allows the loading of PMEL luminal fragment on ILVs to induce fibril nucleation. In terms of processing, APOE exists as multiple glycosylated and sialylated glycoforms within cells and in plasma. The extent of glycosylation and sialylation are tissue and context specific. Glycated in plasma VLDL. Post-translationally, phosphorylated by FAM20C in the extracellular medium.

The protein localises to the secreted. The protein resides in the extracellular space. Its subcellular location is the extracellular matrix. It localises to the extracellular vesicle. It is found in the endosome. The protein localises to the multivesicular body. APOE is an apolipoprotein, a protein associating with lipid particles, that mainly functions in lipoprotein-mediated lipid transport between organs via the plasma and interstitial fluids. APOE is a core component of plasma lipoproteins and is involved in their production, conversion and clearance. Apolipoproteins are amphipathic molecules that interact both with lipids of the lipoprotein particle core and the aqueous environment of the plasma. As such, APOE associates with chylomicrons, chylomicron remnants, very low density lipoproteins (VLDL) and intermediate density lipoproteins (IDL) but shows a preferential binding to high-density lipoproteins (HDL). It also binds a wide range of cellular receptors including the LDL receptor/LDLR, the LDL receptor-related proteins LRP1, LRP2 and LRP8 and the very low-density lipoprotein receptor/VLDLR that mediate the cellular uptake of the APOE-containing lipoprotein particles. Finally, APOE also has a heparin-binding activity and binds heparan-sulfate proteoglycans on the surface of cells, a property that supports the capture and the receptor-mediated uptake of APOE-containing lipoproteins by cells. A main function of APOE is to mediate lipoprotein clearance through the uptake of chylomicrons, VLDLs, and HDLs by hepatocytes. APOE is also involved in the biosynthesis by the liver of VLDLs as well as their uptake by peripheral tissues ensuring the delivery of triglycerides and energy storage in muscle, heart and adipose tissues. By participating in the lipoprotein-mediated distribution of lipids among tissues, APOE plays a critical role in plasma and tissues lipid homeostasis. APOE is also involved in two steps of reverse cholesterol transport, the HDLs-mediated transport of cholesterol from peripheral tissues to the liver, and thereby plays an important role in cholesterol homeostasis. First, it is functionally associated with ABCA1 in the biogenesis of HDLs in tissues. Second, it is enriched in circulating HDLs and mediates their uptake by hepatocytes. APOE also plays an important role in lipid transport in the central nervous system, regulating neuron survival and sprouting. This Peromyscus leucopus (White-footed mouse) protein is Apolipoprotein E (Apoe).